Consider the following 347-residue polypeptide: Uroporphyrinogen decarboxylase (347 aa).

Substrate-binding positions include 23–27 (RQAGR), D73, Y150, T205, and H323.

Belongs to the uroporphyrinogen decarboxylase family. In terms of assembly, homodimer.

It is found in the cytoplasm. It carries out the reaction uroporphyrinogen III + 4 H(+) = coproporphyrinogen III + 4 CO2. Its pathway is porphyrin-containing compound metabolism; protoporphyrin-IX biosynthesis; coproporphyrinogen-III from 5-aminolevulinate: step 4/4. Its function is as follows. Catalyzes the decarboxylation of four acetate groups of uroporphyrinogen-III to yield coproporphyrinogen-III. The chain is Uroporphyrinogen decarboxylase from Ruthia magnifica subsp. Calyptogena magnifica.